A 661-amino-acid chain; its full sequence is mRNA 3'-end-processing protein RNA14 (661 aa).

The disordered stretch occupies residues 1 to 37; sequence MSGNETPDAGTVKSVSPSSGGSSLPARPTLRERDPND. A compositionally biased stretch (low complexity) spans 14-23; that stretch reads SVSPSSGGSS. HAT repeat units follow at residues 67-99, 101-135, 149-181, 192-225, 262-298, 307-339, and 513-548; these read QQVAEIREVFGQLHELFPLESFLWTIHLNWELE, EESGQVETLLAKCLSGELMNNDIYLWSTYLGYVRR, TVLKAYELVMEKCAVFEPRSMQFWQDYLQFLEQ, SRVEILRKLYKRLLCLPVESLERYWEKYTQWEQE, SLPTKLNQATQQNLPAPGQYDEYQLQIWTKWIQWELD, VLRQRVEYVHRQAVQHMCFAPEIWYNYAMFVDE, and YNLDQLKEIYKKVINYESKFGNLNNVYELERRFFEK.

The protein resides in the nucleus. It is found in the cytoplasm. Component of the cleavage factor IA (CFIA) complex, which is involved in the endonucleolytic cleavage during polyadenylation-dependent pre-mRNA 3'-end formation. In Eremothecium gossypii (strain ATCC 10895 / CBS 109.51 / FGSC 9923 / NRRL Y-1056) (Yeast), this protein is mRNA 3'-end-processing protein RNA14 (RNA14).